The chain runs to 231 residues: Chalcone--flavanone isomerase (231 aa).

Substrate is bound by residues T46, N111, and S188.

Belongs to the chalcone isomerase family. Pericarp.

The enzyme catalyses a chalcone = a flavanone.. Its pathway is secondary metabolite biosynthesis; flavonoid biosynthesis. Its function is as follows. Catalyzes the intramolecular cyclization of bicyclic chalcones into tricyclic (S)-flavanones. Responsible for the isomerization of 4,2',4',6'-tetrahydroxychalcone (also termed chalcone) into naringenin. This Zea mays (Maize) protein is Chalcone--flavanone isomerase (CHI).